The primary structure comprises 876 residues: Alanine--tRNA ligase (876 aa).

Zn(2+)-binding residues include histidine 560, histidine 564, cysteine 662, and histidine 666.

The protein belongs to the class-II aminoacyl-tRNA synthetase family. The cofactor is Zn(2+).

It localises to the cytoplasm. The enzyme catalyses tRNA(Ala) + L-alanine + ATP = L-alanyl-tRNA(Ala) + AMP + diphosphate. In terms of biological role, catalyzes the attachment of alanine to tRNA(Ala) in a two-step reaction: alanine is first activated by ATP to form Ala-AMP and then transferred to the acceptor end of tRNA(Ala). Also edits incorrectly charged Ser-tRNA(Ala) and Gly-tRNA(Ala) via its editing domain. This is Alanine--tRNA ligase from Synechococcus elongatus (strain ATCC 33912 / PCC 7942 / FACHB-805) (Anacystis nidulans R2).